We begin with the raw amino-acid sequence, 419 residues long: Indole prenyltransferase tdiB (419 aa).

58 to 59 (PS) lines the L-tryptophan pocket. Residues R81, K165, Y167, R236, K238, Y240, Y330, and Y394 each contribute to the substrate site.

Belongs to the tryptophan dimethylallyltransferase family.

It carries out the reaction didemethylasterriquinone D + dimethylallyl diphosphate = asterriquinone C1 + diphosphate. Its pathway is secondary metabolite biosynthesis. Its function is as follows. Indole prenyltransferase; part of the gene cluster that mediates the biosynthesis of terrequinone A, an antitumor agent. The first step in the biosynthetic pathway for terrequinone A is formation of indole pyruvic acid (IPA) from L-tryptophan by the aminotransferase tdiD. The nonribosomal peptide synthase tdiA then immediately converts unstable IPA to didemethylasterriquinone D (DDAQ D), via condensation of 2 IPA molecules. The symmetric connectivity of the 2 IPA molecules is thought to arise by head-to-tail dual Claisen condensations facilitated by the TE domain. TdiB then catalyzes reverse prenylation by transferring dimethylallyl diphosphate to carbon atom 2' of DDAQ D, to yield asterriquinone C-1. Finally, tdiC and tdiE enzymes robustly convert asterriquinone C-1 to terrequinone A via a transformation involving regular prenylation at carbon atom 5, which requires elimination of the hydroxy group on C-5. This chain is Indole prenyltransferase tdiB, found in Emericella nidulans (strain FGSC A4 / ATCC 38163 / CBS 112.46 / NRRL 194 / M139) (Aspergillus nidulans).